The primary structure comprises 344 residues: tRNA N6-adenosine threonylcarbamoyltransferase (344 aa).

Fe cation-binding residues include H110 and H114. Residues 133–137 (AVSGA), D166, G179, and N278 each bind substrate. D303 is a Fe cation binding site.

It belongs to the KAE1 / TsaD family. It depends on Fe(2+) as a cofactor.

The protein localises to the cytoplasm. It carries out the reaction L-threonylcarbamoyladenylate + adenosine(37) in tRNA = N(6)-L-threonylcarbamoyladenosine(37) in tRNA + AMP + H(+). Its function is as follows. Required for the formation of a threonylcarbamoyl group on adenosine at position 37 (t(6)A37) in tRNAs that read codons beginning with adenine. Is involved in the transfer of the threonylcarbamoyl moiety of threonylcarbamoyl-AMP (TC-AMP) to the N6 group of A37, together with TsaE and TsaB. TsaD likely plays a direct catalytic role in this reaction. The protein is tRNA N6-adenosine threonylcarbamoyltransferase of Chlamydia caviae (strain ATCC VR-813 / DSM 19441 / 03DC25 / GPIC) (Chlamydophila caviae).